We begin with the raw amino-acid sequence, 272 residues long: Glutamate 5-kinase (272 aa).

Lys-15 serves as a coordination point for ATP. Ser-55, Asp-142, and Asn-158 together coordinate substrate. ATP contacts are provided by residues 178-179 (SD) and 220-226 (TGGMLSK).

The protein belongs to the glutamate 5-kinase family.

The protein resides in the cytoplasm. The enzyme catalyses L-glutamate + ATP = L-glutamyl 5-phosphate + ADP. It functions in the pathway amino-acid biosynthesis; L-proline biosynthesis; L-glutamate 5-semialdehyde from L-glutamate: step 1/2. Its function is as follows. Catalyzes the transfer of a phosphate group to glutamate to form L-glutamate 5-phosphate. The sequence is that of Glutamate 5-kinase from Streptococcus equi subsp. zooepidemicus (strain H70).